Reading from the N-terminus, the 131-residue chain is Large ribosomal subunit protein bL19 (131 aa).

It belongs to the bacterial ribosomal protein bL19 family.

In terms of biological role, this protein is located at the 30S-50S ribosomal subunit interface and may play a role in the structure and function of the aminoacyl-tRNA binding site. This chain is Large ribosomal subunit protein bL19, found in Rhodopseudomonas palustris (strain BisA53).